A 92-amino-acid polypeptide reads, in one-letter code: Phospholemman (92 aa).

A signal peptide spans 1–20 (MASPGHILIVCVCLLSMASA). Over 21 to 35 (EAPQEPDPFTYDYHT) the chain is Extracellular. The chain crosses the membrane as a helical span at residues 36 to 56 (LRIGGLTIAGILFILGILIIL). The Cytoplasmic portion of the chain corresponds to 57 to 92 (SKRCRCKFNQQQRTGEPDEEEGTFRSSIRRLSTRRR). Cysteine 60 is lipidated: S-palmitoyl cysteine. Cysteine 62 carries the S-glutathionyl cysteine; alternate modification. The S-palmitoyl cysteine; alternate moiety is linked to residue cysteine 62. A disordered region spans residues 66–92 (QQQRTGEPDEEEGTFRSSIRRLSTRRR). Threonine 79 carries the post-translational modification Phosphothreonine. Serine 82 carries the post-translational modification Phosphoserine. A Phosphoserine; by PKA and PKC modification is found at serine 83. The segment covering 83–92 (SIRRLSTRRR) has biased composition (basic residues). Serine 88 is subject to Phosphoserine; by PKA. At threonine 89 the chain carries Phosphothreonine; by PKC.

The protein belongs to the FXYD family. In terms of assembly, homotetramer. Monomer. Regulatory subunit of the sodium/potassium-transporting ATPase (NKA) which is composed of a catalytic alpha subunit, a non-catalytic beta subunit and an additional regulatory subunit. The monomeric form associates with NKA while the oligomeric form does not. Interacts with the catalytic alpha-1 subunit ATP1A1. Also interacts with the catalytic alpha-2 and alpha-3 subunits ATP1A2 and ATP1A3. Very little interaction with ATP1A1, ATP1A2 or ATP1A3 when phosphorylated at Ser-83. Interacts with the non-catalytic beta-1 subunit ATP1B1. Oxidative stress decreases interaction with ATP1A1 but increases interaction with ATP1B1. In terms of processing, major plasma membrane substrate for cAMP-dependent protein kinase (PKA) and protein kinase C (PKC) in several different tissues. Phosphorylated in response to insulin and adrenergic stimulation. Phosphorylation at Ser-88 stimulates sodium/potassium-transporting ATPase activity while the unphosphorylated form inhibits sodium/potassium-transporting ATPase activity. Phosphorylation increases tetramerization, decreases binding to ATP1A1 and reduces inhibition of ATP1A1 activity. Phosphorylation at Ser-83 leads to greatly reduced interaction with ATP1A1, ATP1A2 and ATP1A3. May be phosphorylated by DMPK. Palmitoylation increases half-life and stability and is enhanced upon phosphorylation at Ser-88 by PKA. As to expression, in adult brain, highest levels are found in the cerebellum and in the lateral, third and fourth ventricles of the choroid plexus (at protein level). Also detected in cells of a portion of the ependymal lining of the lateral ventricle on its rostral surface posterior to the caudate putamen (at protein level). Expressed in a subset of neurons which secrete gonadotropin-releasing hormone.

The protein localises to the cell membrane. Its subcellular location is the sarcolemma. The protein resides in the apical cell membrane. It is found in the membrane. It localises to the caveola. The protein localises to the T-tubule. Functionally, associates with and regulates the activity of the sodium/potassium-transporting ATPase (NKA) which transports Na(+) out of the cell and K(+) into the cell. Inhibits NKA activity in its unphosphorylated state and stimulates activity when phosphorylated. Reduces glutathionylation of the NKA beta-1 subunit ATP1B1, thus reversing glutathionylation-mediated inhibition of ATP1B1. Contributes to female sexual development by maintaining the excitability of neurons which secrete gonadotropin-releasing hormone. The protein is Phospholemman of Rattus norvegicus (Rat).